The sequence spans 928 residues: Isoleucine--tRNA ligase (928 aa).

Residues 57–67 (PFANGNIHMGH) carry the 'HIGH' region motif. Glu552 contacts L-isoleucyl-5'-AMP. The 'KMSKS' region motif lies at 593 to 597 (KMSKS). Lys596 serves as a coordination point for ATP. Residues Cys887, Cys890, Cys907, and Cys910 each contribute to the Zn(2+) site.

It belongs to the class-I aminoacyl-tRNA synthetase family. IleS type 1 subfamily. Monomer. Requires Zn(2+) as cofactor.

The protein localises to the cytoplasm. The catalysed reaction is tRNA(Ile) + L-isoleucine + ATP = L-isoleucyl-tRNA(Ile) + AMP + diphosphate. In terms of biological role, catalyzes the attachment of isoleucine to tRNA(Ile). As IleRS can inadvertently accommodate and process structurally similar amino acids such as valine, to avoid such errors it has two additional distinct tRNA(Ile)-dependent editing activities. One activity is designated as 'pretransfer' editing and involves the hydrolysis of activated Val-AMP. The other activity is designated 'posttransfer' editing and involves deacylation of mischarged Val-tRNA(Ile). The sequence is that of Isoleucine--tRNA ligase from Lacticaseibacillus paracasei (strain ATCC 334 / BCRC 17002 / CCUG 31169 / CIP 107868 / KCTC 3260 / NRRL B-441) (Lactobacillus paracasei).